The following is a 753-amino-acid chain: Inactive protein-tyrosine phosphatase egg-5 (753 aa).

2 disordered regions span residues 26 to 46 and 77 to 116; these read TSLQSFCSGNTDDSSADSTDN and RKKVKKLAQKDRRSKERLNGNSEEDAIEVPRGAPSTYAAP. Over residues 35-46 the composition is skewed to low complexity; it reads NTDDSSADSTDN. Residues 84–94 show a composition bias toward basic and acidic residues; sequence AQKDRRSKERL. The Tyrosine-protein phosphatase domain occupies 408–661; sequence MERRFEILEN…IFVHRLVAFF (254 aa).

This sequence belongs to the protein-tyrosine phosphatase family. As to quaternary structure, part of a complex, consisting of pseudophosphatases egg-3, egg-4, egg-5 and kinase mbk-2; this complex is required for the oocyte-to-zygote transition. Interacts (via tyrosine-protein phosphatase domain) with kinase mbk-2 (via 'Tyr-619' and 'Tyr-621'); mbk-2 tyrosine phosphorylation enhances the interaction.

The protein resides in the cytoplasm. It is found in the cell cortex. Its function is as follows. Inactive phosphatase which acts redundantly with egg-4 in the oocyte-to-zygote transition. Required for polarized cortical actin cytoskeleton rearrangement in the oocyte before and after fertilization. Together with egg-4, required for the cortical localization of kinase mbk-2 in maturing oocyte until the end of meiosis I. Also required for kinase mbk-2, pseudophosphatase egg-3 and chitin synthase chs-1 localization to cytoplasmic foci after fertilization. This chain is Inactive protein-tyrosine phosphatase egg-5, found in Caenorhabditis elegans.